A 955-amino-acid polypeptide reads, in one-letter code: Calsyntenin-2 (955 aa).

An N-terminal signal peptide occupies residues 1–20 (MLPGRLCWVPLLLALGVGSG). At 21-831 (SGGGGDSRQR…SIQHSSVVPS (811 aa)) the chain is on the extracellular side. 2 Cadherin domains span residues 44–160 (IETS…APTF) and 161–280 (KEPA…MPLF). Asparagine 56 and asparagine 98 each carry an N-linked (GlcNAc...) asparagine glycan. N-linked (GlcNAc...) asparagine glycosylation is found at asparagine 342, asparagine 374, asparagine 716, and asparagine 729. A helical transmembrane segment spans residues 832 to 852 (IATVVIIISVCMLVFVVAMGV). The Cytoplasmic segment spans residues 853 to 955 (YRVRIAHQHF…LEWDDSTLPY (103 aa)). Positions 887-955 (PMEKHEGPGH…LEWDDSTLPY (69 aa)) are disordered. Residues 888–898 (MEKHEGPGHGE) are compositionally biased toward basic and acidic residues. Composition is skewed to acidic residues over residues 899 to 913 (DETE…EEEM) and 920 to 929 (DDSEEEEEEE).

The protein belongs to the calsyntenin family. Post-translationally, proteolytically processed under normal cellular conditions. A primary zeta-cleavage generates a large extracellular (soluble) N-terminal domain (sAlc) and a short C-terminal transmembrane fragment (CTF1). A secondary cleavage catalyzed by gamma-secretase within the transmembrane domain releases the beta-Alc-gamma chain in the extracellular milieu and produces an intracellular fragment (AlcICD). This processing is strongly suppressed in the tripartite complex formed with APBA2 and APP, which seems to prevent the association with PSEN1. As to expression, restricted to the brain.

It is found in the postsynaptic cell membrane. It localises to the endoplasmic reticulum membrane. The protein localises to the golgi apparatus membrane. The protein resides in the cell projection. Its subcellular location is the dendrite. Functionally, postsynaptic adhesion molecule that binds to presynaptic neurexins to mediate synapse formation, and which is involved in learning and memory. Promotes synapse development by acting as a cell adhesion molecule at the postsynaptic membrane, which associates with neurexin-alpha at the presynaptic membrane. This is Calsyntenin-2 from Homo sapiens (Human).